Consider the following 74-residue polypeptide: Cytochrome c oxidase assembly factor 5 (74 aa).

A CHCH domain is found at 27–65 (ESDCVVQEGKSPRQCLKEGYCNSLKYAFFECKRSVLDNR). The Cx10C motif motif lies at 30–41 (CVVQEGKSPRQC). 2 cysteine pairs are disulfide-bonded: cysteine 30–cysteine 57 and cysteine 41–cysteine 47. The residue at position 37 (serine 37) is a Phosphoserine. The Cx9C motif signature appears at 47–57 (CNSLKYAFFEC).

It belongs to the PET191 family.

Involved in an early step of the mitochondrial complex IV assembly process. This chain is Cytochrome c oxidase assembly factor 5 (Coa5), found in Pongo abelii (Sumatran orangutan).